A 137-amino-acid chain; its full sequence is uncharacterized protein (137 aa).

Residues 1-32 are disordered; sequence MRDHLPPGLPPDPFADDPCDPSAALDAVEPGQ.

The protein to M.tuberculosis Rv3412.

This is an uncharacterized protein from Mycobacterium leprae (strain TN).